We begin with the raw amino-acid sequence, 84 residues long: NAD(P)H-quinone oxidoreductase subunit O (84 aa).

The protein belongs to the complex I NdhO subunit family. NDH-1 can be composed of about 15 different subunits; different subcomplexes with different compositions have been identified which probably have different functions.

The protein localises to the cellular thylakoid membrane. It carries out the reaction a plastoquinone + NADH + (n+1) H(+)(in) = a plastoquinol + NAD(+) + n H(+)(out). It catalyses the reaction a plastoquinone + NADPH + (n+1) H(+)(in) = a plastoquinol + NADP(+) + n H(+)(out). Functionally, NDH-1 shuttles electrons from an unknown electron donor, via FMN and iron-sulfur (Fe-S) centers, to quinones in the respiratory and/or the photosynthetic chain. The immediate electron acceptor for the enzyme in this species is believed to be plastoquinone. Couples the redox reaction to proton translocation, and thus conserves the redox energy in a proton gradient. Cyanobacterial NDH-1 also plays a role in inorganic carbon-concentration. The sequence is that of NAD(P)H-quinone oxidoreductase subunit O from Parasynechococcus marenigrum (strain WH8102).